Here is a 901-residue protein sequence, read N- to C-terminus: ABC transporter A family member 8 (901 aa).

7 helical membrane-spanning segments follow: residues 34 to 54, 315 to 335, 369 to 389, 402 to 422, 427 to 447, 460 to 477, and 508 to 528; these read LITI…LFDT, IASL…FPVI, FLLI…LIGL, VFFF…SAMF, TATV…IFLF, WIIA…RGLY, and CIML…DQII. Positions 586 to 823 constitute an ABC transporter domain; sequence VLCNNLKKVY…YGGSYVLTVT (238 aa). 624-631 provides a ligand contact to ATP; the sequence is GPNGAGKT.

It belongs to the ABC transporter superfamily. ABCA family. CPR flippase (TC 3.A.1.211) subfamily.

The protein resides in the membrane. This is ABC transporter A family member 8 (ABCA8) from Arabidopsis thaliana (Mouse-ear cress).